Here is a 952-residue protein sequence, read N- to C-terminus: Ubiquitin carboxyl-terminal hydrolase 15 (952 aa).

Residue Ala2 is modified to N-acetylalanine. The segment at 2–223 (AEGGAADLDI…KNEDGTWPRG (222 aa)) is mediates interaction with SART3. In terms of domain architecture, DUSP spans 7 to 118 (ADLDIQRSDI…GQEPIARKVV (112 aa)). Position 226 is a phosphothreonine (Thr226). A USP domain is found at 260–904 (CGLSNLGNTC…AAYVLFYQRQ (645 aa)). Cys269 functions as the Nucleophile in the catalytic mechanism. The residue at position 573 (Thr573) is a Phosphothreonine. A disordered region spans residues 598–666 (TEGSLHCCKD…GDNDSENGLC (69 aa)). Residues 627–644 (METDEPDDESSQDQELPS) show a composition bias toward acidic residues. Catalysis depends on His862, which acts as the Proton acceptor. The tract at residues 923 to 952 (SAATGIPLESDEDSNDNDNDIENENCMHTN) is disordered. A compositionally biased stretch (acidic residues) spans 931-945 (ESDEDSNDNDNDIEN). 2 positions are modified to phosphoserine: Ser932 and Ser936.

It belongs to the peptidase C19 family. In terms of assembly, a homodimer structure has been reported; however it is unclear whether the protein form a homodimer in vivo. Identified in a complex with the COP9 signalosome complex (CSN). Interacts with SMAD1, SMAD2 and SMAD3; the interaction is direct. Forms a complex with SMURF2 and SMAD7. Interacts with TGFBR1. Interacts with SART3; the interaction is direct. May interact with RNF20 and RNF40. May interact with PRKN. Interacts with INCA1. Phosphorylated. Phosphorylation protects against ubiquitination and subsequent degradation by the proteasome. In terms of processing, ubiquitinated, leading to degradation by the proteasome.

The protein localises to the cytoplasm. It localises to the nucleus. It is found in the mitochondrion. The catalysed reaction is Thiol-dependent hydrolysis of ester, thioester, amide, peptide and isopeptide bonds formed by the C-terminal Gly of ubiquitin (a 76-residue protein attached to proteins as an intracellular targeting signal).. In terms of biological role, hydrolase that removes conjugated ubiquitin from target proteins and regulates various pathways such as the TGF-beta receptor signaling, NF-kappa-B and RNF41/NRDP1-PRKN pathways. Acts as a key regulator of TGF-beta receptor signaling pathway, but the precise mechanism is still unclear: according to a report, acts by promoting deubiquitination of monoubiquitinated R-SMADs (SMAD1, SMAD2 and/or SMAD3), thereby alleviating inhibition of R-SMADs and promoting activation of TGF-beta target genes. According to another reports, regulates the TGF-beta receptor signaling pathway by mediating deubiquitination and stabilization of TGFBR1, leading to an enhanced TGF-beta signal. Able to mediate deubiquitination of monoubiquitinated substrates, 'Lys-27'-, 'Lys-48'- and 'Lys-63'-linked polyubiquitin chains. May also regulate gene expression and/or DNA repair through the deubiquitination of histone H2B. Acts as an inhibitor of mitophagy by counteracting the action of parkin (PRKN): hydrolyzes cleavage of 'Lys-48'- and 'Lys-63'-linked polyubiquitin chains attached by parkin on target proteins such as MFN2, thereby reducing parkin's ability to drive mitophagy. Acts as an associated component of COP9 signalosome complex (CSN) and regulates different pathways via this association: regulates NF-kappa-B by mediating deubiquitination of NFKBIA and deubiquitinates substrates bound to VCP. Involved in endosome organization by mediating deubiquitination of SQSTM1: ubiquitinated SQSTM1 forms a molecular bridge that restrains cognate vesicles in the perinuclear region and its deubiquitination releases target vesicles for fast transport into the cell periphery. Acts as a negative regulator of antifungal immunity by mediating 'Lys-27'-linked deubiquitination of CARD9, thereby inactivating CARD9. The chain is Ubiquitin carboxyl-terminal hydrolase 15 (USP15) from Bos taurus (Bovine).